Here is a 28-residue protein sequence, read N- to C-terminus: Metallothionein-like protein type 2 LSC210 (28 aa).

The protein belongs to the metallothionein superfamily. Type 15 family.

Metallothioneins have a high content of cysteine residues that bind various heavy metals. This chain is Metallothionein-like protein type 2 LSC210 (LSC210), found in Brassica napus (Rape).